Here is an 881-residue protein sequence, read N- to C-terminus: Interference hedgehog (881 aa).

Residues 1-26 (MSSSSSSLLLMMLLLLLLLLTSKLEA) form the signal peptide. Over 27-693 (IPVLSSTSPS…NHNETYSLNP (667 aa)) the chain is Extracellular. Ig-like C2-type domains lie at 37–138 (PGVR…IARL), 128–228 (PLVV…IPSS), 242–330 (PYLL…YINV), and 336–425 (PVIV…LQVN). 3 disulfides stabilise this stretch: Cys60-Cys122, Cys167-Cys212, and Cys266-Cys314. N-linked (GlcNAc...) asparagine glycans are attached at residues Asn75, Asn98, Asn194, Asn201, Asn282, Asn349, Asn381, Asn430, and Asn455. The cysteines at positions 358 and 407 are disulfide-linked. Fibronectin type-III domains are found at residues 450 to 558 (PPSA…LQRG) and 566 to 661 (VPEL…TQRS). Residues Arg486, Lys492, and Lys494 each coordinate heparin. Asn517 is a glycosylation site (N-linked (GlcNAc...) asparagine). Residue Arg532 coordinates heparin. An N-linked (GlcNAc...) asparagine glycan is attached at Asn548. The segment at 655–685 (QGRTQRSKLTTTEQPIQQKGGDRNVNTTPNH) is disordered. Over residues 656–671 (GRTQRSKLTTTEQPIQ) the composition is skewed to polar residues. Asn686 is a glycosylation site (N-linked (GlcNAc...) asparagine). Residues 694–714 (LLTGTIGGGALLLLLLIAFSF) traverse the membrane as a helical segment. Residues 715–881 (CLCRRKNRNG…SSGSLNSVGV (167 aa)) lie on the Cytoplasmic side of the membrane. Disordered stretches follow at residues 768 to 791 (NPLDQQQQQPLDEKNTNTNLNSPH) and 809 to 881 (PTTY…SVGV). The segment covering 837–855 (PGSNNNLQQIGSETTTTGQ) has biased composition (polar residues). Residues 865–881 (SSRSENLSSGSLNSVGV) are compositionally biased toward low complexity.

It belongs to the immunoglobulin superfamily. IHOG family. In terms of assembly, homodimer. Heterotetramer; 2 iHog chains bind 2 hh chains when facilitated by heparin, heparin is required to promote high-affinity interactions between hh and iHog.

The protein resides in the membrane. Its function is as follows. Mediates response to the active Hedgehog (Hh) protein signal in embryos, functioning upstream or at the level of patched (ptc). The polypeptide is Interference hedgehog (Drosophila willistoni (Fruit fly)).